Reading from the N-terminus, the 693-residue chain is Elongation factor G (693 aa).

The 275-residue stretch at 9–283 (ERVRNIGIIA…AVCDYLPSPV (275 aa)) folds into the tr-type G domain. GTP is bound by residues 18-25 (AHIDAGKT), 82-86 (DTPGH), and 136-139 (NKMD).

Belongs to the TRAFAC class translation factor GTPase superfamily. Classic translation factor GTPase family. EF-G/EF-2 subfamily.

The protein localises to the cytoplasm. Catalyzes the GTP-dependent ribosomal translocation step during translation elongation. During this step, the ribosome changes from the pre-translocational (PRE) to the post-translocational (POST) state as the newly formed A-site-bound peptidyl-tRNA and P-site-bound deacylated tRNA move to the P and E sites, respectively. Catalyzes the coordinated movement of the two tRNA molecules, the mRNA and conformational changes in the ribosome. The polypeptide is Elongation factor G (Dehalococcoides mccartyi (strain ATCC BAA-2266 / KCTC 15142 / 195) (Dehalococcoides ethenogenes (strain 195))).